Reading from the N-terminus, the 230-residue chain is MYLVFGIIFTSVIVTSCSYNTKDFNSVPDFSPVRADLGYAPSRTAQTYPLPPRESNYSLYRASGNSFFRDPRAMQPGDVLTVQISINDRASLNNKSDLKSDSSSKYTIGTGYSFMDRIAGSLEGESSNQSKGDGKIERQENIRLSVAAIVTDVLPNGNLIIRGSQEVRVNHELRILNIAGVVRPRDISGNNMIEYDKIAEARISYGGRGRISEIQQPPYGQQLLNQISPF.

The first 16 residues, 1–16 (MYLVFGIIFTSVIVTS), serve as a signal peptide directing secretion. Residue C17 is the site of N-palmitoyl cysteine attachment. A lipid anchor (S-diacylglycerol cysteine) is attached at C17.

This sequence belongs to the FlgH family. As to quaternary structure, the basal body constitutes a major portion of the flagellar organelle and consists of four rings (L,P,S, and M) mounted on a central rod.

Its subcellular location is the cell outer membrane. The protein resides in the bacterial flagellum basal body. Its function is as follows. Assembles around the rod to form the L-ring and probably protects the motor/basal body from shearing forces during rotation. This chain is Flagellar L-ring protein, found in Bartonella bacilliformis (strain ATCC 35685 / KC583 / Herrer 020/F12,63).